Consider the following 279-residue polypeptide: Acetyl-coenzyme A carboxylase carboxyl transferase subunit beta (279 aa).

In terms of domain architecture, CoA carboxyltransferase N-terminal spans 23–279 (LWWKCEECGA…LVTLFSMLKV (257 aa)). Residues C27, C30, C46, and C49 each contribute to the Zn(2+) site. The segment at 27–49 (CEECGAMLHKKQFEDHFFTCAEC) adopts a C4-type zinc-finger fold.

Belongs to the AccD/PCCB family. As to quaternary structure, acetyl-CoA carboxylase is a heterohexamer composed of biotin carboxyl carrier protein (AccB), biotin carboxylase (AccC) and two subunits each of ACCase subunit alpha (AccA) and ACCase subunit beta (AccD). Zn(2+) is required as a cofactor.

It localises to the cytoplasm. It carries out the reaction N(6)-carboxybiotinyl-L-lysyl-[protein] + acetyl-CoA = N(6)-biotinyl-L-lysyl-[protein] + malonyl-CoA. The protein operates within lipid metabolism; malonyl-CoA biosynthesis; malonyl-CoA from acetyl-CoA: step 1/1. In terms of biological role, component of the acetyl coenzyme A carboxylase (ACC) complex. Biotin carboxylase (BC) catalyzes the carboxylation of biotin on its carrier protein (BCCP) and then the CO(2) group is transferred by the transcarboxylase to acetyl-CoA to form malonyl-CoA. The polypeptide is Acetyl-coenzyme A carboxylase carboxyl transferase subunit beta (Pelodictyon phaeoclathratiforme (strain DSM 5477 / BU-1)).